A 255-amino-acid chain; its full sequence is Hydroxylmethylpyrimidine kinase (255 aa).

3 residues coordinate pyridoxal 5'-phosphate: Gly18, Gln43, and Asn110. A 4-amino-5-hydroxymethyl-2-methylpyrimidine-binding site is contributed by Gln43. A disulfide bridge connects residues Cys195 and Cys207. Pyridoxal 5'-phosphate is bound at residue Ser208.

The protein belongs to the ThiD family. As to quaternary structure, homodimer. In terms of processing, crystals show a disulfide bond between Cys-195 and Cys-207. This disulfide is possibly an artifact of the purification and crystallization conditions. However, as it is adjacent to the conserved GSGC of the oxyanion hole, this disulfide may help to orient the backbone amides toward the oxanion intermediate.

It carries out the reaction 4-amino-5-hydroxymethyl-2-methylpyrimidine + ATP = 4-amino-2-methyl-5-(phosphooxymethyl)pyrimidine + ADP + H(+). It participates in cofactor biosynthesis; thiamine diphosphate biosynthesis. Its activity is regulated as follows. Inhibited by pyridoxal phosphate at high micromolar concentrations. In terms of biological role, catalyzes the phosphorylation of hydroxymethylpyrimidine (HMP) to hydroxymethylpyrimidine phosphate (HMP-P). Unlike other HMPKs, it cannot catalyze the phosphorylation of HMP-P to generate the diphosphate HMP-PP. Shows no activity with pyridoxal, pyridoxamine or pyridoxine. Does not show phosphatase activity. This Acinetobacter baumannii (strain IS-123) protein is Hydroxylmethylpyrimidine kinase.